A 428-amino-acid chain; its full sequence is 3-phosphoshikimate 1-carboxyvinyltransferase (428 aa).

3-phosphoshikimate-binding residues include lysine 23, serine 24, and arginine 28. Position 23 (lysine 23) interacts with phosphoenolpyruvate. The phosphoenolpyruvate site is built by glycine 97 and arginine 125. 3-phosphoshikimate-binding residues include serine 170, serine 171, glutamine 172, serine 198, aspartate 314, asparagine 337, and lysine 341. Glutamine 172 is a phosphoenolpyruvate binding site. Aspartate 314 serves as the catalytic Proton acceptor. Residues arginine 345, arginine 387, and lysine 412 each contribute to the phosphoenolpyruvate site.

This sequence belongs to the EPSP synthase family. Monomer.

The protein resides in the cytoplasm. The enzyme catalyses 3-phosphoshikimate + phosphoenolpyruvate = 5-O-(1-carboxyvinyl)-3-phosphoshikimate + phosphate. It functions in the pathway metabolic intermediate biosynthesis; chorismate biosynthesis; chorismate from D-erythrose 4-phosphate and phosphoenolpyruvate: step 6/7. In terms of biological role, catalyzes the transfer of the enolpyruvyl moiety of phosphoenolpyruvate (PEP) to the 5-hydroxyl of shikimate-3-phosphate (S3P) to produce enolpyruvyl shikimate-3-phosphate and inorganic phosphate. The protein is 3-phosphoshikimate 1-carboxyvinyltransferase of Serratia proteamaculans (strain 568).